Consider the following 962-residue polypeptide: Translation initiation factor IF-2 (962 aa).

Over residues 52 to 77 (RSHGQADDSSRKKITLTKRETSEIRQ) the composition is skewed to basic and acidic residues. Disordered regions lie at residues 52–87 (RSHG…TRTV) and 121–378 (AVEE…EPVV). Residues 78–87 (SDGTGKTRTV) are compositionally biased toward polar residues. Basic and acidic residues-rich tracts occupy residues 123 to 183 (EEAR…KAEE), 197 to 250 (DSSR…EAEA), and 267 to 278 (PSERKAEEKKAE). Over residues 342–355 (TSGGVGGWRGGPRG) the composition is skewed to gly residues. Positions 462 to 631 (PRPPVVTVMG…LLQAEVLELT (170 aa)) constitute a tr-type G domain. The G1 stretch occupies residues 471–478 (GHVDHGKT). 471-478 (GHVDHGKT) contributes to the GTP binding site. The tract at residues 496–500 (GITQH) is G2. Residues 517-520 (DTPG) form a G3 region. Residues 517–521 (DTPGH) and 571–574 (NKID) contribute to the GTP site. The interval 571-574 (NKID) is G4. Residues 607–609 (SAK) are G5.

Belongs to the TRAFAC class translation factor GTPase superfamily. Classic translation factor GTPase family. IF-2 subfamily.

It localises to the cytoplasm. One of the essential components for the initiation of protein synthesis. Protects formylmethionyl-tRNA from spontaneous hydrolysis and promotes its binding to the 30S ribosomal subunits. Also involved in the hydrolysis of GTP during the formation of the 70S ribosomal complex. In Cupriavidus necator (strain ATCC 17699 / DSM 428 / KCTC 22496 / NCIMB 10442 / H16 / Stanier 337) (Ralstonia eutropha), this protein is Translation initiation factor IF-2.